We begin with the raw amino-acid sequence, 313 residues long: Tagatose-6-phosphate kinase (313 aa).

This sequence belongs to the carbohydrate kinase PfkB family. LacC subfamily.

The enzyme catalyses D-tagatofuranose 6-phosphate + ATP = D-tagatofuranose 1,6-bisphosphate + ADP + H(+). It functions in the pathway carbohydrate metabolism; D-tagatose 6-phosphate degradation; D-glyceraldehyde 3-phosphate and glycerone phosphate from D-tagatose 6-phosphate: step 1/2. The polypeptide is Tagatose-6-phosphate kinase (Enterococcus faecalis (strain ATCC 700802 / V583)).